Here is a 229-residue protein sequence, read N- to C-terminus: MIQTTFPDRALMAELVAKMLWEIKAVHFNAAQPYKLSSGMASPVYIDCRKLLSYPRIRSTVMDFAASTLLRDAGFEQFDCIAGGETAGIPFAALLADRLGLPMIYVRKQPKGHGRNAQIEGNMPEGSRVLVIEDLTTAGGSMFKFIDAVRAAGGIVDHGIALFFYDIFGQQRFTDGKVRLHHIATWRNVLAVARAQQLFDDKTLAEVEAFLDAPLAWSGRNGGVSELSL.

5-phospho-alpha-D-ribose 1-diphosphate-binding positions include Arg-107, Lys-108, Lys-111, His-113, and 133-141; that span reads EDLTTAGGS. Thr-137 is an orotate binding site.

Belongs to the purine/pyrimidine phosphoribosyltransferase family. PyrE subfamily. In terms of assembly, homodimer. Requires Mg(2+) as cofactor.

It carries out the reaction orotidine 5'-phosphate + diphosphate = orotate + 5-phospho-alpha-D-ribose 1-diphosphate. It functions in the pathway pyrimidine metabolism; UMP biosynthesis via de novo pathway; UMP from orotate: step 1/2. Catalyzes the transfer of a ribosyl phosphate group from 5-phosphoribose 1-diphosphate to orotate, leading to the formation of orotidine monophosphate (OMP). The chain is Orotate phosphoribosyltransferase from Rhizobium etli (strain ATCC 51251 / DSM 11541 / JCM 21823 / NBRC 15573 / CFN 42).